We begin with the raw amino-acid sequence, 367 residues long: Flagellar P-ring protein (367 aa).

An N-terminal signal peptide occupies residues 1–21; sequence MYVFKALAGIVLALVATLAHA.

It belongs to the FlgI family. In terms of assembly, the basal body constitutes a major portion of the flagellar organelle and consists of four rings (L,P,S, and M) mounted on a central rod.

It localises to the periplasm. It is found in the bacterial flagellum basal body. Assembles around the rod to form the L-ring and probably protects the motor/basal body from shearing forces during rotation. The polypeptide is Flagellar P-ring protein (Salmonella paratyphi C (strain RKS4594)).